Reading from the N-terminus, the 182-residue chain is Testis development-related protein (182 aa).

Disordered regions lie at residues 1-38 (MWKL…GASL), 52-73 (DEEH…QRLR), and 95-151 (QPKK…NSAS). Ser-7 carries the post-translational modification Phosphoserine. A compositionally biased stretch (low complexity) spans 22–37 (RGAPPASAAAPASGAS). Residues 59–70 (TSRSPKSKGTNQ) are compositionally biased toward polar residues. Positions 116–125 (VADHTEDDRS) are enriched in basic and acidic residues.

Belongs to the TDRP family. Interacts with PRM2. As to expression, strongly expressed in testis. Also detected at lower levels in epididymis, bone marrow and kidney.

The protein resides in the nucleus. Its subcellular location is the cytoplasm. Its function is as follows. Contributes to normal sperm motility, but not essential for male fertility. This is Testis development-related protein (Tdrp) from Mus musculus (Mouse).